We begin with the raw amino-acid sequence, 173 residues long: MAIILGIDPGSRVTGYGVIRQVGRQLSYLGSGCIRTKVDDLPSRLKLIYAGVTEIITQFQPDYFAIEQVFMAKNADSALKLGQARGVAIVAAVNQELPVFEYAARQVKQTVVGIGSAEKSQVQHMVRTLLKLPANPQADAADALAIAITHCHVSQNAMQMSESRLNLARGRLR.

Active-site residues include aspartate 8, glutamate 67, and aspartate 139. The Mg(2+) site is built by aspartate 8, glutamate 67, and aspartate 139.

It belongs to the RuvC family. Homodimer which binds Holliday junction (HJ) DNA. The HJ becomes 2-fold symmetrical on binding to RuvC with unstacked arms; it has a different conformation from HJ DNA in complex with RuvA. In the full resolvosome a probable DNA-RuvA(4)-RuvB(12)-RuvC(2) complex forms which resolves the HJ. The cofactor is Mg(2+).

Its subcellular location is the cytoplasm. It carries out the reaction Endonucleolytic cleavage at a junction such as a reciprocal single-stranded crossover between two homologous DNA duplexes (Holliday junction).. Functionally, the RuvA-RuvB-RuvC complex processes Holliday junction (HJ) DNA during genetic recombination and DNA repair. Endonuclease that resolves HJ intermediates. Cleaves cruciform DNA by making single-stranded nicks across the HJ at symmetrical positions within the homologous arms, yielding a 5'-phosphate and a 3'-hydroxyl group; requires a central core of homology in the junction. The consensus cleavage sequence is 5'-(A/T)TT(C/G)-3'. Cleavage occurs on the 3'-side of the TT dinucleotide at the point of strand exchange. HJ branch migration catalyzed by RuvA-RuvB allows RuvC to scan DNA until it finds its consensus sequence, where it cleaves and resolves the cruciform DNA. In terms of biological role, plays a role in recovery after DNA ADP-ribosylation, probably via replication fork reversal. This is Crossover junction endodeoxyribonuclease RuvC from Escherichia coli O127:H6 (strain E2348/69 / EPEC).